Reading from the N-terminus, the 69-residue chain is Metallothionein-like protein 3 (69 aa).

The protein belongs to the metallothionein superfamily. Type 15 family. Expressed in leaf mesophyll cells, root tips, and at low levels in anthers.

Metallothioneins have a high content of cysteine residues that bind various heavy metals. Functions as a metal chelator of copper (Cu) and zinc (Zn). Plays a role in Cu homeostasis, specifically in the remobilization of Cu from senescing leaves. The mobilization of Cu from internal sources is important for seed development. This Arabidopsis thaliana (Mouse-ear cress) protein is Metallothionein-like protein 3.